The chain runs to 144 residues: Signal recognition particle 19 kDa protein (144 aa).

Residues T117–K144 form a disordered region.

It belongs to the SRP19 family. In terms of assembly, component of a signal recognition particle complex that consists of a 7SL RNA molecule of 300 nucleotides and six protein subunits: SRP72, SRP68, SRP54, SRP19, SRP14 and SRP9. Interacts with IPO5, IPO7, IPO8, KPNB1 and TNPO1. Interactions with IPO8 and TNPO1 may be involved in SRP19 import into the nucleus.

Its subcellular location is the cytoplasm. It is found in the nucleus. The protein resides in the nucleolus. It localises to the nucleoplasm. Its function is as follows. Component of the signal recognition particle (SRP) complex, a ribonucleoprotein complex that mediates the cotranslational targeting of secretory and membrane proteins to the endoplasmic reticulum (ER). Binds directly to 7SL RNA. Mediates binding of SRP54 to the SRP complex. The chain is Signal recognition particle 19 kDa protein from Canis lupus familiaris (Dog).